The sequence spans 319 residues: Mitochondrial fission regulator 1-like-A (319 aa).

The segment at 1 to 37 (MASLGAAAEPERNLFGKDEAEAYESPEGRRSGRKKRT) is disordered. Over residues 9-30 (EPERNLFGKDEAEAYESPEGRR) the composition is skewed to basic and acidic residues.

It belongs to the MTFR1 family.

Its subcellular location is the mitochondrion outer membrane. Functionally, mitochondrial protein required for adaptation of miochondrial dynamics to metabolic changes. Regulates mitochondrial morphology at steady state and mediates AMPK-dependent stress-induced mitochondrial fragmentation via the control of OPA1 levels. This Xenopus laevis (African clawed frog) protein is Mitochondrial fission regulator 1-like-A (mtfr1l-a).